A 146-amino-acid polypeptide reads, in one-letter code: MRLNQLSPSAGSRPDAKRAGRGAGSGLGKTAGRGHKGQHSRSGGFHKVGFEGGQMPLQRRVPKYGFSSQKGLRTAEVRLHEIARVDGDTVDLAALHKAGVVRKNMRYVKVIASGTIDRAVSVRGVKVTQGARKAIEAAGGQVVEEG.

Residues 1-10 show a composition bias toward polar residues; the sequence is MRLNQLSPSA. Residues 1–54 are disordered; sequence MRLNQLSPSAGSRPDAKRAGRGAGSGLGKTAGRGHKGQHSRSGGFHKVGFEGGQ. The segment covering 21 to 31 has biased composition (gly residues); it reads RGAGSGLGKTA.

The protein belongs to the universal ribosomal protein uL15 family. In terms of assembly, part of the 50S ribosomal subunit.

Binds to the 23S rRNA. This chain is Large ribosomal subunit protein uL15, found in Halorhodospira halophila (strain DSM 244 / SL1) (Ectothiorhodospira halophila (strain DSM 244 / SL1)).